Reading from the N-terminus, the 594-residue chain is Aspartate--tRNA ligase (594 aa).

E171 contributes to the L-aspartate binding site. The segment at 195 to 198 (QLFK) is aspartate. An L-aspartate-binding site is contributed by R217. ATP contacts are provided by residues 217–219 (RDE) and Q226. Residue H449 coordinates L-aspartate. E483 lines the ATP pocket. L-aspartate is bound at residue R490. 535–538 (GLDR) contributes to the ATP binding site.

The protein belongs to the class-II aminoacyl-tRNA synthetase family. Type 1 subfamily. Homodimer.

It is found in the cytoplasm. The enzyme catalyses tRNA(Asp) + L-aspartate + ATP = L-aspartyl-tRNA(Asp) + AMP + diphosphate. Functionally, catalyzes the attachment of L-aspartate to tRNA(Asp) in a two-step reaction: L-aspartate is first activated by ATP to form Asp-AMP and then transferred to the acceptor end of tRNA(Asp). The sequence is that of Aspartate--tRNA ligase from Proteus mirabilis (strain HI4320).